The primary structure comprises 223 residues: Sigma non-opioid intracellular receptor 1 (223 aa).

Over 1 to 9 (MCWAVGRRW) the chain is Lumenal. Residues 2–8 (CWAVGRR) are targeting to endoplasmic reticulum-associated lipid droplets. A helical transmembrane segment spans residues 10-30 (AWAALLLAVAAVLAQVVWLWL). Residues 31 to 223 (GTQSFVFQHE…LTTYLFGQDA (193 aa)) are Cytoplasmic-facing. Residues 99–106 (SLSEYVLL) form an important for ligand-binding region. Positions 177 to 223 (VIPSTLGFALADTVFSTQDFLTLFYTLRAYARGLRLELTTYLFGQDA) are C-terminal hydrophobic region.

It belongs to the ERG2 family. In terms of assembly, homotrimer. Forms a ternary complex with ANK2 and ITPR3. The complex is disrupted by agonists. Interacts with KCNA4. Interacts with KCNA2; cocaine consumption leads to increased interaction. Interacts with RNF112 in an oxidative stress-regulated manner.

The protein resides in the nucleus inner membrane. The protein localises to the nucleus outer membrane. Its subcellular location is the nucleus envelope. It localises to the cytoplasmic vesicle. It is found in the endoplasmic reticulum membrane. The protein resides in the membrane. The protein localises to the lipid droplet. Its subcellular location is the cell junction. It localises to the cell membrane. It is found in the cell projection. The protein resides in the growth cone. The protein localises to the postsynaptic density membrane. Functions in lipid transport from the endoplasmic reticulum and is involved in a wide array of cellular functions probably through regulation of the biogenesis of lipid microdomains at the plasma membrane. Involved in the regulation of different receptors it plays a role in BDNF signaling and EGF signaling. Also regulates ion channels like the potassium channel and could modulate neurotransmitter release. Plays a role in calcium signaling through modulation together with ANK2 of the ITP3R-dependent calcium efflux at the endoplasmic reticulum. Plays a role in several other cell functions including proliferation, survival and death. Originally identified for its ability to bind various psychoactive drugs it is involved in learning processes, memory and mood alteration. Necessary for proper mitochondrial axonal transport in motor neurons, in particular the retrograde movement of mitochondria. Plays a role in protecting cells against oxidative stress-induced cell death via its interaction with RNF112. In Bos taurus (Bovine), this protein is Sigma non-opioid intracellular receptor 1 (SIGMAR1).